A 1456-amino-acid polypeptide reads, in one-letter code: Retrovirus-related Pol polyprotein from transposon RE2 (1456 aa).

Positions 205 to 252 (NVVTHRNTNTNRNQNNRGDNRNYNNNNNRSNSWQPSSSGSRSDNRQPK) are disordered. Low complexity predominate over residues 210–245 (RNTNTNRNQNNRGDNRNYNNNNNRSNSWQPSSSGSR). The CCHC-type zinc-finger motif lies at 257-273 (RCQICSVQGHSAKRCPQ). Low complexity predominate over residues 276-291 (QFQSTTNQQQSTSPFT). Residues 276–295 (QFQSTTNQQQSTSPFTPWQP) are disordered. Asp313 acts as the For protease activity in catalysis. The Integrase catalytic domain occupies 498-661 (TSSKPLEYIY…SPFQKLFGQP (164 aa)). Residues Asp509 and Asp571 each contribute to the Mg(2+) site. Residues 738–754 (STSQEQRSDSAPNWPSH) are compositionally biased toward polar residues. Residues 738 to 896 (STSQEQRSDS…PPLPPVLPAP (159 aa)) form a disordered region. Over residues 793–814 (SSSNLPSSSISSPSSSEPTAPS) the composition is skewed to low complexity. The span at 816-827 (NGPQPTAQPHQT) shows a compositional bias: polar residues. Composition is skewed to low complexity over residues 828-841 (QNSN…NNPN) and 849-886 (SPNQ…STST). Residues 887 to 896 (PPLPPVLPAP) are compositionally biased toward pro residues. The region spanning 965-1208 (NHTWDLVPPP…LTAKPVATPM (244 aa)) is the Reverse transcriptase Ty1/copia-type domain.

It catalyses the reaction DNA(n) + a 2'-deoxyribonucleoside 5'-triphosphate = DNA(n+1) + diphosphate. In Arabidopsis thaliana (Mouse-ear cress), this protein is Retrovirus-related Pol polyprotein from transposon RE2 (RE2).